The sequence spans 238 residues: Nucleoside diphosphate kinase III, chloroplastic/mitochondrial (238 aa).

Residues 1–85 (MSSQICRSAS…YMIQDQEVLA (85 aa)) constitute a chloroplast and mitochondrion transit peptide. ATP is bound by residues Lys96, Phe144, Arg172, Thr178, Arg189, and Asn199. The active-site Pros-phosphohistidine intermediate is the His202.

This sequence belongs to the NDK family. As to quaternary structure, homohexamer. Mg(2+) is required as a cofactor.

Its subcellular location is the plastid. The protein localises to the chloroplast thylakoid lumen. It is found in the mitochondrion intermembrane space. It catalyses the reaction a 2'-deoxyribonucleoside 5'-diphosphate + ATP = a 2'-deoxyribonucleoside 5'-triphosphate + ADP. It carries out the reaction a ribonucleoside 5'-diphosphate + ATP = a ribonucleoside 5'-triphosphate + ADP. In terms of biological role, major role in the synthesis of nucleoside triphosphates other than ATP. The ATP gamma phosphate is transferred to the NDP beta phosphate via a ping-pong mechanism, using a phosphorylated active-site intermediate. Shows the highest specificity towards GDP. This is Nucleoside diphosphate kinase III, chloroplastic/mitochondrial (NDPK3) from Arabidopsis thaliana (Mouse-ear cress).